Reading from the N-terminus, the 247-residue chain is NAD-dependent protein deacetylase (247 aa).

Residues 1–244 enclose the Deacetylase sirtuin-type domain; it reads MIYEKVAEEL…PKILENVRQK (244 aa). Residues Ala22, Thr26, Phe33, Arg34, Gln98, Ile100, Asp101, and His116 each contribute to the NAD(+) site. Phe33 is a binding site for nicotinamide. Ile100 and Asp101 together coordinate nicotinamide. Catalysis depends on His116, which acts as the Proton acceptor. Cys124, Cys127, Cys149, and Cys151 together coordinate Zn(2+). Residues Ser187, Ser188, Asn212, and Val230 each coordinate NAD(+).

Belongs to the sirtuin family. Class U subfamily. As to quaternary structure, monomer. Zn(2+) is required as a cofactor.

The protein resides in the cytoplasm. The catalysed reaction is N(6)-acetyl-L-lysyl-[protein] + NAD(+) + H2O = 2''-O-acetyl-ADP-D-ribose + nicotinamide + L-lysyl-[protein]. Its function is as follows. NAD-dependent protein deacetylase which modulates the activities of several enzymes which are inactive in their acetylated form. Deacetylates the N-terminal lysine residue of albA1, the major archaeal DNA compaction protein and that, in turn, increases albA1's DNA binding affinity, thereby repressing transcription. The protein is NAD-dependent protein deacetylase of Saccharolobus solfataricus (strain ATCC 35092 / DSM 1617 / JCM 11322 / P2) (Sulfolobus solfataricus).